The following is a 135-amino-acid chain: uncharacterized protein (135 aa).

This sequence belongs to the asp23 family.

This is an uncharacterized protein from Bacillus subtilis (strain 168).